A 644-amino-acid chain; its full sequence is MDNIGVIIKIEGNEAIVMTDDCSFKKVPIKDGMHPGQKILVPNNEVIQKENKSIKRISAVATGIAAVFLMVLSLIWINKPGRPDGIYAYIDVDINPSLNFLIDREGKVKALNPLNDDAQEIIRGVEFEDMFFSEALTQIIKISKAKGIIDENKTNYVLICAALDDNYNLQSDDKSRAQTEFEEFLDGIRESIEKACGNTVIPQTVKVPFEYLKMAKQNDVSMGRYLVYQKLEDIGVNLSIEELKSLDIDEILKKYGVGFDELFKSEYTELPYGTLQTGEDSVVSTEDVPVSPKNAFETMAVPTNTPSISTKPSATPAENPTPKLTQKPTPVPAKTGERTSTTPTPTPAPTVRNGTGSGLRGEYYNNMDFSRFQFVRIDPCIDFDWGEGTPDQSIGKDTYSVRWTGKVEPRYSETYTFYTVTDDGVRLWVDGVLLIDKWKSQSATEHSEQIYLEAGKKYDIKMEYYQHVRAASAKLMWSSKSQQKEIIPSSQLYPSDGPLPQKDVNGLSAEYYGDAELKDKRFTRIDDAINFNWDKDFPVGELKDGKFSVRWVGKIDTRYTEEYTFHTVANGGVRVWINNVLIIDNWQNQGKEAENSGKIELKAGRQYDIKVEYCNYGEPAFIKLLWSSQRQKKEVVPSKNLFAD.

Topologically, residues 1–56 (MDNIGVIIKIEGNEAIVMTDDCSFKKVPIKDGMHPGQKILVPNNEVIQKENKSIKR) are cytoplasmic. The RsgI N-terminal anti-sigma domain occupies 3–50 (NIGVIIKIEGNEAIVMTDDCSFKKVPIKDGMHPGQKILVPNNEVIQKE). A helical transmembrane segment spans residues 57–77 (ISAVATGIAAVFLMVLSLIWI). The Extracellular segment spans residues 78 to 644 (NKPGRPDGIY…VVPSKNLFAD (567 aa)). Residues 302–328 (PTNTPSISTKPSATPAENPTPKLTQKP) are compositionally biased toward polar residues. A disordered region spans residues 302-359 (PTNTPSISTKPSATPAENPTPKLTQKPTPVPAKTGERTSTTPTPTPAPTVRNGTGSGL). PA14 domains follow at residues 354–491 (GTGS…PSSQ) and 502–640 (KDVN…PSKN).

Interacts (via RsgI N-terminal anti-sigma domain) with SigI3.

It is found in the cell membrane. Functionally, anti-sigma factor for SigI3. Negatively regulates SigI3 activity through direct interaction. Binding of the polysaccharide substrate to the extracellular C-terminal sensing domain of RsgI3 may induce a conformational change in its N-terminal cytoplasmic region, leading to the release and activation of SigI3. In Acetivibrio thermocellus (strain ATCC 27405 / DSM 1237 / JCM 9322 / NBRC 103400 / NCIMB 10682 / NRRL B-4536 / VPI 7372) (Clostridium thermocellum), this protein is Anti-sigma-I factor RsgI3.